The chain runs to 75 residues: DNA-directed RNA polymerase subunit Rpo5 (75 aa).

It belongs to the archaeal Rpo5/eukaryotic RPB5 RNA polymerase subunit family. As to quaternary structure, part of the RNA polymerase complex.

It is found in the cytoplasm. The enzyme catalyses RNA(n) + a ribonucleoside 5'-triphosphate = RNA(n+1) + diphosphate. Functionally, DNA-dependent RNA polymerase (RNAP) catalyzes the transcription of DNA into RNA using the four ribonucleoside triphosphates as substrates. The polypeptide is DNA-directed RNA polymerase subunit Rpo5 (Pyrobaculum aerophilum (strain ATCC 51768 / DSM 7523 / JCM 9630 / CIP 104966 / NBRC 100827 / IM2)).